Reading from the N-terminus, the 159-residue chain is 2-C-methyl-D-erythritol 2,4-cyclodiphosphate synthase (159 aa).

Residues Asp-10 and His-12 each coordinate a divalent metal cation. Residues 10–12 (DVH) and 36–37 (HS) contribute to the 4-CDP-2-C-methyl-D-erythritol 2-phosphate site. His-44 contributes to the a divalent metal cation binding site. Residues 58 to 60 (DIG), 134 to 137 (TTSE), Phe-141, and Arg-144 each bind 4-CDP-2-C-methyl-D-erythritol 2-phosphate.

It belongs to the IspF family. Homotrimer. A divalent metal cation serves as cofactor.

It carries out the reaction 4-CDP-2-C-methyl-D-erythritol 2-phosphate = 2-C-methyl-D-erythritol 2,4-cyclic diphosphate + CMP. Its pathway is isoprenoid biosynthesis; isopentenyl diphosphate biosynthesis via DXP pathway; isopentenyl diphosphate from 1-deoxy-D-xylulose 5-phosphate: step 4/6. Its function is as follows. Involved in the biosynthesis of isopentenyl diphosphate (IPP) and dimethylallyl diphosphate (DMAPP), two major building blocks of isoprenoid compounds. Catalyzes the conversion of 4-diphosphocytidyl-2-C-methyl-D-erythritol 2-phosphate (CDP-ME2P) to 2-C-methyl-D-erythritol 2,4-cyclodiphosphate (ME-CPP) with a corresponding release of cytidine 5-monophosphate (CMP). This Cereibacter sphaeroides (strain ATCC 17029 / ATH 2.4.9) (Rhodobacter sphaeroides) protein is 2-C-methyl-D-erythritol 2,4-cyclodiphosphate synthase.